A 172-amino-acid chain; its full sequence is RNA pyrophosphohydrolase (172 aa).

A Nudix hydrolase domain is found at 6 to 149; the sequence is GYRPNVGIIL…KRDVYRMALK (144 aa). Residues 38 to 59 carry the Nudix box motif; that stretch reads GGIKYGESPEQAMYRELMEEVG.

The protein belongs to the Nudix hydrolase family. RppH subfamily. A divalent metal cation is required as a cofactor.

In terms of biological role, accelerates the degradation of transcripts by removing pyrophosphate from the 5'-end of triphosphorylated RNA, leading to a more labile monophosphorylated state that can stimulate subsequent ribonuclease cleavage. This Methylobacillus flagellatus (strain ATCC 51484 / DSM 6875 / VKM B-1610 / KT) protein is RNA pyrophosphohydrolase.